The following is a 710-amino-acid chain: Polyribonucleotide nucleotidyltransferase (710 aa).

D491 and D497 together coordinate Mg(2+). In terms of domain architecture, KH spans 558-618; the sequence is PRIYKIQVKP…SAAQKAIEII (61 aa). The 69-residue stretch at 628–696 folds into the S1 motif domain; sequence GRIYMGKVTR…ELGRVRLSRK (69 aa).

Belongs to the polyribonucleotide nucleotidyltransferase family. It depends on Mg(2+) as a cofactor.

The protein resides in the cytoplasm. It carries out the reaction RNA(n+1) + phosphate = RNA(n) + a ribonucleoside 5'-diphosphate. Involved in mRNA degradation. Catalyzes the phosphorolysis of single-stranded polyribonucleotides processively in the 3'- to 5'-direction. In Thermodesulfovibrio yellowstonii (strain ATCC 51303 / DSM 11347 / YP87), this protein is Polyribonucleotide nucleotidyltransferase.